Reading from the N-terminus, the 90-residue chain is Non-structural protein NS-S (90 aa).

Residues 4 to 29 (KLSLPGKNLKMQKRRWKPTRMMLTRA) form a nucleolar signal region.

The protein belongs to the hantavirus NS-S protein family. As to quaternary structure, interacts with host MAVS; this interaction may reduce MAVS ubiquitination.

It is found in the host cytoplasm. The protein resides in the host perinuclear region. Its subcellular location is the host nucleus. In terms of biological role, antagonizes host type-I IFN signaling pathway. The protein is Non-structural protein NS-S (N) of Homo sapiens (Human).